The chain runs to 295 residues: Hydroxylase/desaturase efuI (295 aa).

This sequence belongs to the asaB hydroxylase/desaturase family.

The protein operates within secondary metabolite biosynthesis; terpenoid biosynthesis. Hydroxylase/desaturase; part of the gene cluster that mediates the biosynthesis of enfumafungin, a glycosylated fernene-type triterpenoid with potent antifungal activity, mediated by its interaction with beta-1,3-glucan synthase and the fungal cell wall. The pathway begins with the terpene cyclase-glycosyl transferase fusion protein that most likely uses 2,3-oxidosqualene as substrate and catalyzes glycosylation immediately after cyclization. The fernene glycoside then could be processed by the desaturase efuI which catalyzes isomerization of a double bond established by efuA to form the core structure. The latter would then undergo a series of hydroxylations in unknown order at C-2, C-19, C-23 and C-25, which would be catalyzed by two of the three cytochrome P450 monooxygenases efuB, efuG or efuH. The hydroxy-group at C-25 becomes oxidized by the dehydrogenase efuE to enable a spontaneous, non-enzymatic hemiacetal formation with C-23. After hydroxylation at C-2, acetylation by the acetyltransferase efuC takes place. The final steps in enfumafungin biosynthesis require expansion of the 5-membered ring by lactonization via a Baeyer-Villiger reaction mediated by one of the BGC's cytochrome P450 monooxygenases (efuB, efuG or efuH) followed by ring cleavage. This type of reaction would establish a double bond between C-20 and C-21 which could be reduced by the reductase efuL to form the final product. The polypeptide is Hydroxylase/desaturase efuI (Hormonema carpetanum).